The chain runs to 117 residues: UPF0102 protein YPN_3432 (117 aa).

The protein belongs to the UPF0102 family.

The chain is UPF0102 protein YPN_3432 from Yersinia pestis bv. Antiqua (strain Nepal516).